The sequence spans 554 residues: Glutamine--tRNA ligase (554 aa).

A 'HIGH' region motif is present at residues 34 to 44; sequence PEPNGYLHIGH. ATP contacts are provided by residues 35–37 and 41–47; these read EPN and HIGHAKS. Positions 67 and 212 each coordinate L-glutamine. ATP contacts are provided by residues T231, 261–262, and 269–271; these read RL and MSK. A 'KMSKS' region motif is present at residues 268–272; the sequence is VMSKR. The interval 317–324 is interaction with tRNA; sequence TKQDNTIE.

It belongs to the class-I aminoacyl-tRNA synthetase family. In terms of assembly, monomer.

Its subcellular location is the cytoplasm. The catalysed reaction is tRNA(Gln) + L-glutamine + ATP = L-glutaminyl-tRNA(Gln) + AMP + diphosphate. The sequence is that of Glutamine--tRNA ligase from Escherichia coli O17:K52:H18 (strain UMN026 / ExPEC).